A 149-amino-acid chain; its full sequence is Transcriptional repressor NrdR (149 aa).

Residues 3-34 fold into a zinc finger; that stretch reads CPFCSAVDTKVIDSRLVAEGHQVRRRRECLLC. Residues 49-139 form the ATP-cone domain; it reads PRVIKSNGSR…VYRSFEDIRE (91 aa).

The protein belongs to the NrdR family. It depends on Zn(2+) as a cofactor.

Negatively regulates transcription of bacterial ribonucleotide reductase nrd genes and operons by binding to NrdR-boxes. This chain is Transcriptional repressor NrdR, found in Aeromonas hydrophila subsp. hydrophila (strain ATCC 7966 / DSM 30187 / BCRC 13018 / CCUG 14551 / JCM 1027 / KCTC 2358 / NCIMB 9240 / NCTC 8049).